A 642-amino-acid polypeptide reads, in one-letter code: Threonine--tRNA ligase (642 aa).

In terms of domain architecture, TGS spans 1 to 61 (MPIITLPDGS…EQDSQLAIIT (61 aa)). The interval 243–534 (DHRKIGKQLD…LTEEYAGFFP (292 aa)) is catalytic. Cysteine 334, histidine 385, and histidine 511 together coordinate Zn(2+).

This sequence belongs to the class-II aminoacyl-tRNA synthetase family. As to quaternary structure, homodimer. Requires Zn(2+) as cofactor.

It localises to the cytoplasm. The catalysed reaction is tRNA(Thr) + L-threonine + ATP = L-threonyl-tRNA(Thr) + AMP + diphosphate + H(+). Catalyzes the attachment of threonine to tRNA(Thr) in a two-step reaction: L-threonine is first activated by ATP to form Thr-AMP and then transferred to the acceptor end of tRNA(Thr). Also edits incorrectly charged L-seryl-tRNA(Thr). In Proteus mirabilis (strain HI4320), this protein is Threonine--tRNA ligase.